A 371-amino-acid chain; its full sequence is Cytochrome b (371 aa).

8 consecutive transmembrane segments (helical) span residues Phe25–Val45, Trp69–Ile90, Trp105–Xaa125, Xaa170–Xaa190, Tyr218–Leu238, Leu280–His300, Ile312–Thr332, and Phe339–Pro358. Residues His75 and His89 each coordinate heme b. Residues Xaa174 and Xaa188 each coordinate heme b.

It belongs to the cytochrome b family. The cytochrome bc1 complex contains 3 respiratory subunits (MT-CYB, CYC1 and UQCRFS1), 2 core proteins (UQCRC1 and UQCRC2) and probably 6 low-molecular weight proteins. Heme b is required as a cofactor.

The protein resides in the mitochondrion inner membrane. Component of the ubiquinol-cytochrome c reductase complex (complex III or cytochrome b-c1 complex) that is part of the mitochondrial respiratory chain. The b-c1 complex mediates electron transfer from ubiquinol to cytochrome c. Contributes to the generation of a proton gradient across the mitochondrial membrane that is then used for ATP synthesis. In Eryx tataricus (Tartar sand boa), this protein is Cytochrome b (MT-CYB).